Consider the following 257-residue polypeptide: Steroid 5-alpha-reductase DET2 (257 aa).

6 consecutive transmembrane segments (helical) span residues 11–31 (FIVFFILVMAFPTFILCQFFT), 47–67 (ISPPIAWAFMESPTLWLTIIV), 78–97 (LAFLLISPYLFHYTNRTIIY), 110–130 (FPLNIAVTAFIFNLLNAYIQS), 151–171 (IGLVIFGSGMLLNIWADGVLL), and 200–220 (IMEWLGWALMTWSWAGLAFFV).

Belongs to the steroid 5-alpha reductase family. In terms of tissue distribution, mostly expressed in leaves and hypocotyls and, to a lower extent, in stems, cotyledons, roots, seeds and callus.

It is found in the membrane. The enzyme catalyses a 3-oxo-5alpha-steroid + NADP(+) = a 3-oxo-Delta(4)-steroid + NADPH + H(+). It participates in plant hormone biosynthesis; brassinosteroid biosynthesis. With respect to regulation, repressed by steroid (4-MA, VG106, PD91, PD17, Finasteride) and non-steroid (AS601811, AFA27, AFA76, AFA131, AFA192) inhibitors; steroid inhibitors are generally more efficient. Its function is as follows. Involved in a reduction step in the biosynthesis of the plant steroid, brassinolide (BL). Can use progesterone, testosterone, androstenedione and campestenone as substrate. The sequence is that of Steroid 5-alpha-reductase DET2 from Solanum lycopersicum (Tomato).